We begin with the raw amino-acid sequence, 728 residues long: Protein psiK (728 aa).

An N-terminal signal peptide occupies residues 1–20 (MKKTFIFLYCVVLFISTTLA). Topologically, residues 21-666 (VEMKKTQDFN…FICKTAAVVS (646 aa)) are extracellular. 3 N-linked (GlcNAc...) asparagine glycosylation sites follow: N61, N74, and N104. Positions 118–266 (MNLDDKSNYF…YDFCGVCTGN (149 aa)) constitute a PA14 domain. N-linked (GlcNAc...) asparagine glycosylation is found at N272, N326, N335, N438, N543, and N638. The helical transmembrane segment at 667–687 (VGVAVGVAVGGAIALGVFIFA) threads the bilayer. Topologically, residues 688–728 (GKKGYDYWKASQGVTMATSNANPLYESNPSGGENPIYTSPN) are cytoplasmic.

Belongs to the prespore-cell-inducing factor family.

Its subcellular location is the membrane. This chain is Protein psiK (psiK), found in Dictyostelium discoideum (Social amoeba).